Here is a 214-residue protein sequence, read N- to C-terminus: MRLRNKQWAKPLILAHPEMILVRPEKMQGHWQSRFDQARPLYLEVGSGKGQFIVEMAKTHPDRNFIALELQEAAVAMILKKQVALKLPNLQLVLGDGADLTDYFSEGEIDGLFLNFSDPWPKTRHEKRRLTYRDFLRQYQAIMKPDALLQFKTDNQGLFEYSLVSMNHFGMTFDLVSLNLHHDKRVTDNVPTEYEEKFSADGGRIYELVAHFKH.

S-adenosyl-L-methionine-binding residues include Glu44, Glu69, Asp96, and Asp118. Asp118 is an active-site residue. Lys122 is a binding site for substrate. Residues 124 to 129 (RHEKRR) are interaction with RNA. Residues Asp154 and 192-195 (TEYE) contribute to the substrate site.

The protein belongs to the class I-like SAM-binding methyltransferase superfamily. TrmB family.

It catalyses the reaction guanosine(46) in tRNA + S-adenosyl-L-methionine = N(7)-methylguanosine(46) in tRNA + S-adenosyl-L-homocysteine. It participates in tRNA modification; N(7)-methylguanine-tRNA biosynthesis. Functionally, catalyzes the formation of N(7)-methylguanine at position 46 (m7G46) in tRNA. The polypeptide is tRNA (guanine-N(7)-)-methyltransferase (Lacticaseibacillus casei (strain BL23) (Lactobacillus casei)).